Reading from the N-terminus, the 142-residue chain is Maximins y/H11 (142 aa).

An N-terminal signal peptide occupies residues 1–18; the sequence is MNFKYIVAVSFLITSGYA. Residues 19-43 constitute a propeptide that is removed on maturation; that stretch reads ESVKNDEQSLSQRDVLEEESLREIR. Position 68 is a phenylalanine amide (Phe68). The propeptide occupies 72-121; it reads SAEDHEVMKRLEAVIRDLDSLDHPEEASERETRGFNQEEIANLFTKKEKR. Residue Ile141 is modified to Isoleucine amide.

It belongs to the bombinin family. Expressed by the skin glands.

It is found in the secreted. Maximin-y shows antimicrobial activity against bacteria and against the fungus C.albicans. It has little hemolytic activity. In terms of biological role, maximin-H11 shows antimicrobial activity against bacteria and against the fungus C.albicans. Shows strong hemolytic activity. The sequence is that of Maximins y/H11 from Bombina maxima (Giant fire-bellied toad).